A 64-amino-acid chain; its full sequence is Large ribosomal subunit protein bL35 (64 aa).

This sequence belongs to the bacterial ribosomal protein bL35 family.

The chain is Large ribosomal subunit protein bL35 from Mycoplasmopsis pulmonis (strain UAB CTIP) (Mycoplasma pulmonis).